Here is a 187-residue protein sequence, read N- to C-terminus: Dihydrofolate reductase (187 aa).

Residues 4–185 enclose the DHFR domain; that stretch reads PLNCIVAVSQ…IKYKFEVYEK (182 aa). NADP(+)-binding positions include alanine 10 and 16–22; that span reads GIGKNGD. 31–36 provides a ligand contact to substrate; sequence EFQYFQ. 55–57 provides a ligand contact to NADP(+); that stretch reads RKT. Arginine 71 is a binding site for substrate. NADP(+)-binding positions include 77-79 and 117-124; these read SRE and GGSSVYKE.

This sequence belongs to the dihydrofolate reductase family. In terms of assembly, homodimer.

Its subcellular location is the mitochondrion. The protein resides in the cytoplasm. It carries out the reaction (6S)-5,6,7,8-tetrahydrofolate + NADP(+) = 7,8-dihydrofolate + NADPH + H(+). It functions in the pathway cofactor biosynthesis; tetrahydrofolate biosynthesis; 5,6,7,8-tetrahydrofolate from 7,8-dihydrofolate: step 1/1. Its function is as follows. Key enzyme in folate metabolism. Contributes to the de novo mitochondrial thymidylate biosynthesis pathway. Catalyzes an essential reaction for de novo glycine and purine synthesis, and for DNA precursor synthesis. Binds its own mRNA and that of DHFR2. This chain is Dihydrofolate reductase (DHFR), found in Bos taurus (Bovine).